A 306-amino-acid chain; its full sequence is Acetyl-coenzyme A carboxylase carboxyl transferase subunit beta (306 aa).

Residues 25 to 294 (VWTKCDSCGQ…PSPDAPREAV (270 aa)) form the CoA carboxyltransferase N-terminal domain. Zn(2+)-binding residues include Cys29, Cys32, Cys48, and Cys51. Residues 29–51 (CDSCGQVLYRAELERNLEVCPKC) form a C4-type zinc finger. Positions 286–306 (SPDAPREAVVVPPVPDQDHEA) are disordered.

Belongs to the AccD/PCCB family. Acetyl-CoA carboxylase is a heterohexamer composed of biotin carboxyl carrier protein (AccB), biotin carboxylase (AccC) and two subunits each of ACCase subunit alpha (AccA) and ACCase subunit beta (AccD). It depends on Zn(2+) as a cofactor.

It localises to the cytoplasm. The enzyme catalyses N(6)-carboxybiotinyl-L-lysyl-[protein] + acetyl-CoA = N(6)-biotinyl-L-lysyl-[protein] + malonyl-CoA. It participates in lipid metabolism; malonyl-CoA biosynthesis; malonyl-CoA from acetyl-CoA: step 1/1. Its function is as follows. Component of the acetyl coenzyme A carboxylase (ACC) complex. Biotin carboxylase (BC) catalyzes the carboxylation of biotin on its carrier protein (BCCP) and then the CO(2) group is transferred by the transcarboxylase to acetyl-CoA to form malonyl-CoA. The chain is Acetyl-coenzyme A carboxylase carboxyl transferase subunit beta from Cronobacter sakazakii (strain ATCC BAA-894) (Enterobacter sakazakii).